A 317-amino-acid polypeptide reads, in one-letter code: Adenosine receptor A3 (317 aa).

The Extracellular portion of the chain corresponds to 1 to 14; the sequence is MPVNSTAVSWTSVT. N-linked (GlcNAc...) asparagine glycosylation occurs at asparagine 4. A helical transmembrane segment spans residues 15-37; the sequence is YITVEILIGLCAIVGNVLVIWVV. Residues 38 to 48 are Cytoplasmic-facing; it reads KLNPSLQTTTF. Residues 49–72 form a helical membrane-spanning segment; that stretch reads YFIVSLALADIAVGVLVMPLAIVI. The Extracellular portion of the chain corresponds to 73–84; that stretch reads SLGVTIHFYSCL. Cysteine 83 and cysteine 165 are oxidised to a cystine. The helical transmembrane segment at 85-106 threads the bilayer; sequence FMTCLMLIFTHASIMSLLAIAV. Residues 107–126 lie on the Cytoplasmic side of the membrane; it reads DRYLRVKLTVRYRRVTTQRR. A helical transmembrane segment spans residues 127-148; sequence IWLALGLCWLVSFLVGLTPMFG. Topologically, residues 149-176 are extracellular; that stretch reads WNMKLSSADENLTFLPCRFRSVMRMDYM. N-linked (GlcNAc...) asparagine glycosylation is present at asparagine 159. The chain crosses the membrane as a helical span at residues 177-197; sequence VYFSFFLWILVPLVVMCAIYF. Topologically, residues 198 to 230 are cytoplasmic; that stretch reads DIFYIIRNRLSQSFSGSRETGAFYGREFKTAKS. The helical transmembrane segment at 231-254 threads the bilayer; it reads LLLVLFLFALCWLPLSIINCILYF. At 255–260 the chain is on the extracellular side; it reads DGQVPQ. The chain crosses the membrane as a helical span at residues 261 to 283; the sequence is TVLYLGILLSHANSMMNPIVYAY. The Cytoplasmic portion of the chain corresponds to 284 to 317; it reads KIKKFKETYLLILKACVMCQPSKSMDPSTEQTSE. The S-palmitoyl cysteine moiety is linked to residue cysteine 302.

This sequence belongs to the G-protein coupled receptor 1 family. Post-translationally, phosphorylation on Thr-315 and Ser-316 may be crucial for rapid desensitization. Phosphorylation on Thr-315 may be necessary for phosphorylation on Ser-316 to occur. In terms of tissue distribution, most abundant in lung, spleen and pineal gland. Moderate expression in brain, kidney and testis.

The protein resides in the cell membrane. Receptor for adenosine. The activity of this receptor is mediated by G proteins which inhibits adenylyl cyclase. In Ovis aries (Sheep), this protein is Adenosine receptor A3 (ADORA3).